The sequence spans 215 residues: UPF0502 protein YceH (215 aa).

It belongs to the UPF0502 family.

This Salmonella paratyphi C (strain RKS4594) protein is UPF0502 protein YceH.